The sequence spans 443 residues: ATP-dependent protease ATPase subunit HslU (443 aa).

ATP-binding positions include V18, 60–65 (GVGKTE), D255, E321, and R393.

This sequence belongs to the ClpX chaperone family. HslU subfamily. In terms of assembly, a double ring-shaped homohexamer of HslV is capped on each side by a ring-shaped HslU homohexamer. The assembly of the HslU/HslV complex is dependent on binding of ATP.

The protein resides in the cytoplasm. In terms of biological role, ATPase subunit of a proteasome-like degradation complex; this subunit has chaperone activity. The binding of ATP and its subsequent hydrolysis by HslU are essential for unfolding of protein substrates subsequently hydrolyzed by HslV. HslU recognizes the N-terminal part of its protein substrates and unfolds these before they are guided to HslV for hydrolysis. The sequence is that of ATP-dependent protease ATPase subunit HslU from Colwellia psychrerythraea (strain 34H / ATCC BAA-681) (Vibrio psychroerythus).